A 463-amino-acid chain; its full sequence is T-box transcription factor TBX1-A (463 aa).

Disordered regions lie at residues Ser39 to Ala58 and Gly75 to Asn104. The span at Gly75–Ser96 shows a compositional bias: low complexity. A DNA-binding region (T-box) is located at residues Leu119–Asp297. Disordered stretches follow at residues Arg320–Gly354 and Val377–Tyr409. Positions Asn323–Gly332 are enriched in polar residues. The segment covering Ser333–Ala347 has biased composition (basic and acidic residues). Residues Lys420 to Ile431 carry the Nuclear localization signal motif.

In terms of assembly, binds DNA as a dimer. Interacts with dscr6/ripply3.

It is found in the nucleus. Its function is as follows. Probable transcriptional regulator involved in developmental processes. Binds to the palindromic T site 5'-TTCACACCTAGGTGTGAA-3' DNA sequence. Induces pre-placodal ectoderm (PPE) gene expression in regions where RIPPLY3 is absent. Plays a role in the formation of the anteroposterior (AP) axis during embryonic development; required to establish the posterolateral border of the pre-placodal ectoderm (PPE) acting downstream of the retinoic acid receptor (RAR) signaling. This chain is T-box transcription factor TBX1-A (tbx1-a), found in Xenopus laevis (African clawed frog).